The following is a 221-amino-acid chain: Thiopurine S-methyltransferase (221 aa).

Residues W12, L47, E68, and R125 each contribute to the S-adenosyl-L-methionine site.

Belongs to the class I-like SAM-binding methyltransferase superfamily. TPMT family.

The protein localises to the cytoplasm. The enzyme catalyses S-adenosyl-L-methionine + a thiopurine = S-adenosyl-L-homocysteine + a thiopurine S-methylether.. The sequence is that of Thiopurine S-methyltransferase from Legionella pneumophila subsp. pneumophila (strain Philadelphia 1 / ATCC 33152 / DSM 7513).